The chain runs to 257 residues: uncharacterized protein (257 aa).

An ATP-binding site is contributed by 7–14 (GKGGVGKT).

This sequence to M.jannaschii MJ0084 and MJ0685.

This is an uncharacterized protein from Methanocaldococcus jannaschii (strain ATCC 43067 / DSM 2661 / JAL-1 / JCM 10045 / NBRC 100440) (Methanococcus jannaschii).